Reading from the N-terminus, the 276-residue chain is Biotin synthase (276 aa).

One can recognise a Radical SAM core domain in the interval 1-226 (MKKIYLCAIS…EAIIMLAGGR (226 aa)). 3 residues coordinate [4Fe-4S] cluster: Cys-17, Cys-21, and Cys-24. [2Fe-2S] cluster contacts are provided by Cys-61, Cys-95, and Cys-153.

The protein belongs to the radical SAM superfamily. Biotin synthase family. As to quaternary structure, homodimer. [4Fe-4S] cluster serves as cofactor. It depends on [2Fe-2S] cluster as a cofactor.

The catalysed reaction is (4R,5S)-dethiobiotin + (sulfur carrier)-SH + 2 reduced [2Fe-2S]-[ferredoxin] + 2 S-adenosyl-L-methionine = (sulfur carrier)-H + biotin + 2 5'-deoxyadenosine + 2 L-methionine + 2 oxidized [2Fe-2S]-[ferredoxin]. It participates in cofactor biosynthesis; biotin biosynthesis; biotin from 7,8-diaminononanoate: step 2/2. Functionally, catalyzes the conversion of dethiobiotin (DTB) to biotin by the insertion of a sulfur atom into dethiobiotin via a radical-based mechanism. The sequence is that of Biotin synthase from Nautilia profundicola (strain ATCC BAA-1463 / DSM 18972 / AmH).